The following is a 184-amino-acid chain: Photosystem I assembly protein Ycf4 (184 aa).

The next 2 helical transmembrane spans lie at 21 to 41 (YFWATIILLGGLSFFLVGLSS) and 63 to 83 (IIMTFYGTAAILISLFLWLTI).

This sequence belongs to the Ycf4 family.

It is found in the plastid. The protein localises to the chloroplast thylakoid membrane. In terms of biological role, seems to be required for the assembly of the photosystem I complex. The chain is Photosystem I assembly protein Ycf4 from Gracilaria tenuistipitata var. liui (Red alga).